A 216-amino-acid chain; its full sequence is Uracil phosphoribosyltransferase (216 aa).

30–34 (KNLVK) serves as a coordination point for GTP. 5-phospho-alpha-D-ribose 1-diphosphate-binding positions include R80, R105, and 140 to 148 (DPMIATGST). Residues I203 and 208–210 (GDA) contribute to the uracil site. Residue D209 participates in 5-phospho-alpha-D-ribose 1-diphosphate binding.

The protein belongs to the UPRTase family. It depends on Mg(2+) as a cofactor.

It catalyses the reaction UMP + diphosphate = 5-phospho-alpha-D-ribose 1-diphosphate + uracil. Its pathway is pyrimidine metabolism; UMP biosynthesis via salvage pathway; UMP from uracil: step 1/1. With respect to regulation, allosterically activated by GTP. Catalyzes the conversion of uracil and 5-phospho-alpha-D-ribose 1-diphosphate (PRPP) to UMP and diphosphate. This is Uracil phosphoribosyltransferase from Sulfolobus acidocaldarius (strain ATCC 33909 / DSM 639 / JCM 8929 / NBRC 15157 / NCIMB 11770).